The following is a 398-amino-acid chain: Mitochondrial protein import protein mas5 (398 aa).

Residues 7–88 (GYYKVLELSP…KKKKEYDSGM (82 aa)) form the J domain. The CR-type zinc finger occupies 139 to 219 (GKVSKFNVRT…CNGAEYIQDK (81 aa)). 144–146 (FNV) provides a ligand contact to substrate. 8 residues coordinate Zn(2+): C152, C155, C166, C169, C192, C195, C207, and C210. CXXCXGXG motif repeat units lie at residues 152-159 (CTTCDGKG), 166-173 (CKKCNGNG), 192-199 (CDGCDGSG), and 207-214 (CSTCNGAE). Substrate-binding positions include 221 to 222 (MF) and 253 to 255 (VIF). A disordered region spans residues 367 to 386 (FGSMPEPERDHEDASEEGAQ).

This sequence belongs to the DnaJ family. In terms of assembly, homodimer. Requires Zn(2+) as cofactor.

The protein localises to the cytoplasm. In terms of biological role, probably involved in mitosomal protein import. The protein is Mitochondrial protein import protein mas5 (MAS5) of Encephalitozoon cuniculi (strain GB-M1) (Microsporidian parasite).